Reading from the N-terminus, the 397-residue chain is Thioredoxin-interacting protein (397 aa).

K213 participates in a covalent cross-link: Glycyl lysine isopeptide (Lys-Gly) (interchain with G-Cter in ubiquitin). S362 carries the phosphoserine modification.

This sequence belongs to the arrestin family. Homodimer; disulfide-linked. Interacts with TXN/thioredoxin through its redox-active site. Interacts with transcriptional repressors ZBTB16, ZBTB32 and HDAC1. Interacts with DDIT4. In terms of processing, ubiquitinated; undergoes heterotypic 'Lys-48'-/'Lys-63'-branched polyubiquitination catalyzed by ITCH and UBR5 resulting in proteasomal degradation. Deubiquitinated by USP5, leading to TXNIP stabilization. As to expression, ubiquitously expressed.

It is found in the cytoplasm. In terms of biological role, may act as an oxidative stress mediator by inhibiting thioredoxin activity or by limiting its bioavailability. Interacts with COPS5 and restores COPS5-induced suppression of CDKN1B stability, blocking the COPS5-mediated translocation of CDKN1B from the nucleus to the cytoplasm. Functions as a transcriptional repressor, possibly by acting as a bridge molecule between transcription factors and corepressor complexes, and over-expression will induce G0/G1 cell cycle arrest. Required for the maturation of natural killer cells. Acts as a suppressor of tumor cell growth. Inhibits the proteasomal degradation of DDIT4, and thereby contributes to the inhibition of the mammalian target of rapamycin complex 1 (mTORC1). In Mus musculus (Mouse), this protein is Thioredoxin-interacting protein (Txnip).